The sequence spans 286 residues: Probable protein S-acyltransferase 16 (286 aa).

2 consecutive transmembrane segments (helical) span residues 11–31 (PVTV…FTFI) and 45–65 (NAAA…IAVF). Residues 97–147 (RYCQKCSHFKPPRAHHCRVCKRCVLRMDHHCIWINNCVGHTNYKVFFVFVV) enclose the DHHC domain. Catalysis depends on C127, which acts as the S-palmitoyl cysteine intermediate. A run of 2 helical transmembrane segments spans residues 141 to 161 (VFFV…VLLV) and 182 to 202 (IYVI…VLLG).

It belongs to the DHHC palmitoyltransferase family.

The protein localises to the golgi apparatus membrane. The enzyme catalyses L-cysteinyl-[protein] + hexadecanoyl-CoA = S-hexadecanoyl-L-cysteinyl-[protein] + CoA. Its function is as follows. Palmitoyl acyltransferase. This is Probable protein S-acyltransferase 16 (PAT16) from Arabidopsis thaliana (Mouse-ear cress).